The chain runs to 446 residues: Saccharopine dehydrogenase [NADP(+), L-glutamate-forming] (446 aa).

NADP(+)-binding positions include 10 to 13 (SGFV), 33 to 35 (CRT), 54 to 55 (DV), Ile-75, 97 to 98 (SS), 124 to 126 (LDP), and Ser-174. L-saccharopine contacts are provided by residues 98 to 99 (SY) and Asp-125. Residues Arg-223 and 244–246 (TLR) each bind L-saccharopine.

The protein belongs to the saccharopine dehydrogenase family. Interacts with TRM112.

The enzyme catalyses L-saccharopine + NADP(+) + H2O = (S)-2-amino-6-oxohexanoate + L-glutamate + NADPH + H(+). It participates in amino-acid biosynthesis; L-lysine biosynthesis via AAA pathway; L-lysine from L-alpha-aminoadipate (fungal route): step 2/3. The sequence is that of Saccharopine dehydrogenase [NADP(+), L-glutamate-forming] (LYS9) from Saccharomyces cerevisiae (strain ATCC 204508 / S288c) (Baker's yeast).